A 79-amino-acid polypeptide reads, in one-letter code: MIKPLIEFCVGNLASGSQAALEKLEKDPNLDVMEYGCLGYCGICFEGPFALVNGEVVQGSTVEELVNNVYEYLDENPMF.

It belongs to the UPF0349 family.

The protein is UPF0349 protein BCE33L4669 of Bacillus cereus (strain ZK / E33L).